Consider the following 505-residue polypeptide: Glutamate--tRNA ligase (505 aa).

Positions 12 to 22 (PSPTGPLHIGG) match the 'HIGH' region motif. Residues 260-264 (KLSKR) carry the 'KMSKS' region motif. An ATP-binding site is contributed by K263.

It belongs to the class-I aminoacyl-tRNA synthetase family. Glutamate--tRNA ligase type 1 subfamily. As to quaternary structure, monomer.

Its subcellular location is the cytoplasm. The catalysed reaction is tRNA(Glu) + L-glutamate + ATP = L-glutamyl-tRNA(Glu) + AMP + diphosphate. In terms of biological role, catalyzes the attachment of glutamate to tRNA(Glu) in a two-step reaction: glutamate is first activated by ATP to form Glu-AMP and then transferred to the acceptor end of tRNA(Glu). This is Glutamate--tRNA ligase from Porphyromonas gingivalis (strain ATCC BAA-308 / W83).